A 141-amino-acid chain; its full sequence is Hemoglobin subunit alpha-A (141 aa).

Residues 1–141 form the Globin domain; sequence VLSGPDKTNV…VGAVLTAKYR (141 aa). O2 is bound at residue His-58. His-87 contacts heme b.

This sequence belongs to the globin family. As to quaternary structure, heterotetramer of two alpha chains and two beta chains. As to expression, red blood cells.

Its function is as follows. Involved in oxygen transport from the lung to the various peripheral tissues. This Rhea americana (Greater rhea) protein is Hemoglobin subunit alpha-A (HBAA).